A 426-amino-acid polypeptide reads, in one-letter code: Mediator of RNA polymerase II transcription subunit 4 (426 aa).

The segment at 1-56 (MLQHQIVQSPARLGLTGPGSPSVQNPTPTRHGHPTSSSSSQSQHQQIQQQPNLLPS) is disordered. Over residues 19–28 (GSPSVQNPTP) the composition is skewed to polar residues. Over residues 36–56 (SSSSSQSQHQQIQQQPNLLPS) the composition is skewed to low complexity. Residues 160–212 (TELQEILDLQDAKQKVAREIKSKDSSLLAFANKLKDAERVLDMLVDDYSDYRK) adopt a coiled-coil conformation. 2 disordered regions span residues 214–236 (KRSK…STTV) and 373–426 (IAAP…DDED). Over residues 406–426 (ILEDDDSSDYSSDDASSDDED) the composition is skewed to acidic residues.

This sequence belongs to the Mediator complex subunit 4 family. Component of the Mediator complex.

It localises to the nucleus. Component of the Mediator complex, a coactivator involved in the regulated transcription of nearly all RNA polymerase II-dependent genes. Mediator functions as a bridge to convey information from gene-specific regulatory proteins to the basal RNA polymerase II transcription machinery. The Mediator complex, having a compact conformation in its free form, is recruited to promoters by direct interactions with regulatory proteins and serves for the assembly of a functional preinitiation complex with RNA polymerase II and the general transcription factors. This chain is Mediator of RNA polymerase II transcription subunit 4 (MED4), found in Arabidopsis thaliana (Mouse-ear cress).